Here is a 1008-residue protein sequence, read N- to C-terminus: Translation initiation factor IF-2 (1008 aa).

3 disordered regions span residues 113–136, 153–235, and 253–405; these read AVTA…KGNV, DKDS…PAAP, and GLTV…YRKD. 2 stretches are compositionally biased toward basic and acidic residues: residues 153–180 and 189–213; these read DKDS…KAKP and PKPE…KAET. Composition is skewed to low complexity over residues 294–329 and 342–358; these read GPNK…PRPQ and GGPN…SNGP. Over residues 365–381 the composition is skewed to basic and acidic residues; it reads ASEKGEVTGKQIQDKIK. Positions 507–677 constitute a tr-type G domain; that stretch reads DRAPIVTIMG…LLEAEMLELK (171 aa). The tract at residues 516–523 is G1; sequence GHVDHGKT. 516 to 523 contributes to the GTP binding site; the sequence is GHVDHGKT. Residues 541–545 are G2; sequence GITQH. Residues 563 to 566 are G3; the sequence is DTPG. Residues 563 to 567 and 617 to 620 each bind GTP; these read DTPGH and NKID. A G4 region spans residues 617 to 620; that stretch reads NKID. The segment at 653 to 655 is G5; that stretch reads SAK.

The protein belongs to the TRAFAC class translation factor GTPase superfamily. Classic translation factor GTPase family. IF-2 subfamily.

It localises to the cytoplasm. In terms of biological role, one of the essential components for the initiation of protein synthesis. Protects formylmethionyl-tRNA from spontaneous hydrolysis and promotes its binding to the 30S ribosomal subunits. Also involved in the hydrolysis of GTP during the formation of the 70S ribosomal complex. This chain is Translation initiation factor IF-2, found in Cytophaga hutchinsonii (strain ATCC 33406 / DSM 1761 / CIP 103989 / NBRC 15051 / NCIMB 9469 / D465).